A 258-amino-acid chain; its full sequence is 5'-nucleotidase SurE (258 aa).

Residues Asp9, Asp10, Ser42, and Asn96 each coordinate a divalent metal cation.

The protein belongs to the SurE nucleotidase family. A divalent metal cation is required as a cofactor.

The protein resides in the cytoplasm. The enzyme catalyses a ribonucleoside 5'-phosphate + H2O = a ribonucleoside + phosphate. Nucleotidase that shows phosphatase activity on nucleoside 5'-monophosphates. This chain is 5'-nucleotidase SurE, found in Campylobacter jejuni subsp. jejuni serotype O:2 (strain ATCC 700819 / NCTC 11168).